Reading from the N-terminus, the 297-residue chain is Cytidine deaminase (297 aa).

2 consecutive CMP/dCMP-type deaminase domains span residues 50 to 170 and 189 to 297; these read SDKE…FGPK and ETES…YASL. 91–93 contributes to the substrate binding site; it reads NME. Histidine 104 is a Zn(2+) binding site. The active-site Proton donor is the glutamate 106. Zn(2+) contacts are provided by cysteine 131 and cysteine 134.

The protein belongs to the cytidine and deoxycytidylate deaminase family. As to quaternary structure, homodimer. The cofactor is Zn(2+).

It carries out the reaction cytidine + H2O + H(+) = uridine + NH4(+). It catalyses the reaction 2'-deoxycytidine + H2O + H(+) = 2'-deoxyuridine + NH4(+). Functionally, this enzyme scavenges exogenous and endogenous cytidine and 2'-deoxycytidine for UMP synthesis. This is Cytidine deaminase from Aliivibrio fischeri (strain ATCC 700601 / ES114) (Vibrio fischeri).